The sequence spans 331 residues: Holliday junction branch migration complex subunit RuvB (331 aa).

Residues 1–182 (MSNDTLHKYE…FGIPLHLEFY (182 aa)) form a large ATPase domain (RuvB-L) region. ATP is bound by residues Leu-21, Arg-22, Gly-63, Lys-66, Thr-67, Thr-68, 129–131 (EDY), Arg-172, Tyr-182, and Arg-219. Thr-67 provides a ligand contact to Mg(2+). Residues 183–254 (SVDELVLVIK…FANSALFRLG (72 aa)) form a small ATPAse domain (RuvB-S) region. A head domain (RuvB-H) region spans residues 257–331 (GAGFDKMDLK…FEYLLSSKYI (75 aa)). DNA contacts are provided by Arg-310 and Arg-315.

The protein belongs to the RuvB family. As to quaternary structure, homohexamer. Forms an RuvA(8)-RuvB(12)-Holliday junction (HJ) complex. HJ DNA is sandwiched between 2 RuvA tetramers; dsDNA enters through RuvA and exits via RuvB. An RuvB hexamer assembles on each DNA strand where it exits the tetramer. Each RuvB hexamer is contacted by two RuvA subunits (via domain III) on 2 adjacent RuvB subunits; this complex drives branch migration. In the full resolvosome a probable DNA-RuvA(4)-RuvB(12)-RuvC(2) complex forms which resolves the HJ.

It localises to the cytoplasm. The catalysed reaction is ATP + H2O = ADP + phosphate + H(+). Functionally, the RuvA-RuvB-RuvC complex processes Holliday junction (HJ) DNA during genetic recombination and DNA repair, while the RuvA-RuvB complex plays an important role in the rescue of blocked DNA replication forks via replication fork reversal (RFR). RuvA specifically binds to HJ cruciform DNA, conferring on it an open structure. The RuvB hexamer acts as an ATP-dependent pump, pulling dsDNA into and through the RuvAB complex. RuvB forms 2 homohexamers on either side of HJ DNA bound by 1 or 2 RuvA tetramers; 4 subunits per hexamer contact DNA at a time. Coordinated motions by a converter formed by DNA-disengaged RuvB subunits stimulates ATP hydrolysis and nucleotide exchange. Immobilization of the converter enables RuvB to convert the ATP-contained energy into a lever motion, pulling 2 nucleotides of DNA out of the RuvA tetramer per ATP hydrolyzed, thus driving DNA branch migration. The RuvB motors rotate together with the DNA substrate, which together with the progressing nucleotide cycle form the mechanistic basis for DNA recombination by continuous HJ branch migration. Branch migration allows RuvC to scan DNA until it finds its consensus sequence, where it cleaves and resolves cruciform DNA. The protein is Holliday junction branch migration complex subunit RuvB of Anaplasma marginale (strain Florida).